Reading from the N-terminus, the 315-residue chain is Biotin synthase (315 aa).

The Radical SAM core domain occupies 39 to 266 (NSLQFATLLS…KSAIRLTAGR (228 aa)). Residues cysteine 54, cysteine 58, and cysteine 61 each contribute to the [4Fe-4S] cluster site. Residues cysteine 98, cysteine 129, cysteine 189, and arginine 261 each contribute to the [2Fe-2S] cluster site.

This sequence belongs to the radical SAM superfamily. Biotin synthase family. As to quaternary structure, homodimer. The cofactor is [4Fe-4S] cluster. [2Fe-2S] cluster is required as a cofactor.

The catalysed reaction is (4R,5S)-dethiobiotin + (sulfur carrier)-SH + 2 reduced [2Fe-2S]-[ferredoxin] + 2 S-adenosyl-L-methionine = (sulfur carrier)-H + biotin + 2 5'-deoxyadenosine + 2 L-methionine + 2 oxidized [2Fe-2S]-[ferredoxin]. The protein operates within cofactor biosynthesis; biotin biosynthesis; biotin from 7,8-diaminononanoate: step 2/2. In terms of biological role, catalyzes the conversion of dethiobiotin (DTB) to biotin by the insertion of a sulfur atom into dethiobiotin via a radical-based mechanism. The chain is Biotin synthase from Legionella pneumophila (strain Paris).